A 494-amino-acid polypeptide reads, in one-letter code: Transcriptional regulator calD (494 aa).

It is found in the nucleus. In terms of biological role, transcription co-regulator that might be involved in the regulation of the expression of the gene cluster that mediates the biosynthesis of calbistrins and related compounds such as decumbenones. Calbistrin A is a secondary metabolite with an interesting structure that was recently found to have bioactivity against leukemia cells. It consists of two polyketides linked by an ester bond: a bicyclic decalin containing polyketide and a linear 12 carbon dioic acid structure. This Penicillium decumbens protein is Transcriptional regulator calD.